Reading from the N-terminus, the 364-residue chain is Methylthioribose-1-phosphate isomerase (364 aa).

The active-site Proton donor is the Asp-254.

The protein belongs to the eIF-2B alpha/beta/delta subunits family. MtnA subfamily.

The protein resides in the cytoplasm. Its subcellular location is the nucleus. It carries out the reaction 5-(methylsulfanyl)-alpha-D-ribose 1-phosphate = 5-(methylsulfanyl)-D-ribulose 1-phosphate. The protein operates within amino-acid biosynthesis; L-methionine biosynthesis via salvage pathway; L-methionine from S-methyl-5-thio-alpha-D-ribose 1-phosphate: step 1/6. Its function is as follows. Catalyzes the interconversion of methylthioribose-1-phosphate (MTR-1-P) into methylthioribulose-1-phosphate (MTRu-1-P). This Drosophila simulans (Fruit fly) protein is Methylthioribose-1-phosphate isomerase.